The following is a 257-amino-acid chain: Hydroxyethylthiazole kinase (257 aa).

Met49 serves as a coordination point for substrate. ATP is bound by residues Arg124 and Thr170. Substrate is bound at residue Gly197.

Belongs to the Thz kinase family. Requires Mg(2+) as cofactor.

It catalyses the reaction 5-(2-hydroxyethyl)-4-methylthiazole + ATP = 4-methyl-5-(2-phosphooxyethyl)-thiazole + ADP + H(+). It participates in cofactor biosynthesis; thiamine diphosphate biosynthesis; 4-methyl-5-(2-phosphoethyl)-thiazole from 5-(2-hydroxyethyl)-4-methylthiazole: step 1/1. In terms of biological role, catalyzes the phosphorylation of the hydroxyl group of 4-methyl-5-beta-hydroxyethylthiazole (THZ). This Klebsiella pneumoniae subsp. pneumoniae (strain ATCC 700721 / MGH 78578) protein is Hydroxyethylthiazole kinase.